The chain runs to 312 residues: Phospho-N-acetylmuramoyl-pentapeptide-transferase (312 aa).

The next 9 helical transmembrane spans lie at Met1–Lys21, Gly48–Ile68, Glu76–Leu96, Phe115–His135, Gly140–Val160, Ala165–Leu185, Val214–Leu234, Val238–Gln258, and Val289–Gly309.

The protein belongs to the glycosyltransferase 4 family. MraY subfamily. Requires Mg(2+) as cofactor.

It is found in the cell membrane. The catalysed reaction is UDP-N-acetyl-alpha-D-muramoyl-L-alanyl-gamma-D-glutamyl-meso-2,6-diaminopimeloyl-D-alanyl-D-alanine + di-trans,octa-cis-undecaprenyl phosphate = di-trans,octa-cis-undecaprenyl diphospho-N-acetyl-alpha-D-muramoyl-L-alanyl-D-glutamyl-meso-2,6-diaminopimeloyl-D-alanyl-D-alanine + UMP. It functions in the pathway cell wall biogenesis; peptidoglycan biosynthesis. Functionally, catalyzes the initial step of the lipid cycle reactions in the biosynthesis of the cell wall peptidoglycan: transfers peptidoglycan precursor phospho-MurNAc-pentapeptide from UDP-MurNAc-pentapeptide onto the lipid carrier undecaprenyl phosphate, yielding undecaprenyl-pyrophosphoryl-MurNAc-pentapeptide, known as lipid I. The chain is Phospho-N-acetylmuramoyl-pentapeptide-transferase from Deinococcus radiodurans (strain ATCC 13939 / DSM 20539 / JCM 16871 / CCUG 27074 / LMG 4051 / NBRC 15346 / NCIMB 9279 / VKM B-1422 / R1).